The following is a 302-amino-acid chain: Ubiquitin thioesterase OTU1 (302 aa).

The interval 5 to 83 (RCKARSGTQP…IVEEDTSKPS (79 aa)) is UBX-like. The OTU domain occupies 103 to 228 (LARRVVPADN…GIHYDPLERK (126 aa)). The cys-loop stretch occupies residues 108–114 (VPADNSC). Residue D111 is part of the active site. The active-site Nucleophile is the C114. The segment at 167-177 (IRREETWGGAI) is variable-loop. The segment at 217–221 (YDGIH) is his-loop. Position 220 (I220) interacts with substrate. H221 is an active-site residue. Residues 245-250 (DVVLAQ) are S2 site. Residues 272 to 296 (LRCMVCQKGLTGQVEAREHAKETGH) form a C2H2-type zinc finger. H296 is a catalytic residue.

The protein localises to the cytoplasm. It catalyses the reaction Thiol-dependent hydrolysis of ester, thioester, amide, peptide and isopeptide bonds formed by the C-terminal Gly of ubiquitin (a 76-residue protein attached to proteins as an intracellular targeting signal).. Functionally, hydrolase that can remove conjugated ubiquitin from proteins and participates in endoplasmic reticulum-associated degradation (ERAD) for misfolded lumenal proteins. May act by triming the ubiquitin chain on the associated substrate to facilitate their threading through the VCP/p97 pore. Ubiquitin moieties on substrates may present a steric impediment to the threading process when the substrate is transferred to the VCP pore and threaded through VCP's axial channel. Mediates deubiquitination of 'Lys-27'-, 'Lys-29'- and 'Lys-33'-linked polyubiquitin chains. Also able to hydrolyze 'Lys-11'-linked ubiquitin chains. Cleaves both polyubiquitin and di-ubiquitin. The sequence is that of Ubiquitin thioesterase OTU1 (YOD1) from Gallus gallus (Chicken).